Consider the following 326-residue polypeptide: Transmembrane protein 171 (326 aa).

4 helical membrane-spanning segments follow: residues I22–F42, M57–A77, L114–V134, and F161–V181. A disordered region spans residues F229–P326. Residues P230 to S240 are compositionally biased toward low complexity. Polar residues predominate over residues S257–P266. 2 stretches are compositionally biased toward low complexity: residues S288 to L302 and A312 to P326.

The protein localises to the membrane. The polypeptide is Transmembrane protein 171 (TMEM171) (Bos taurus (Bovine)).